A 237-amino-acid chain; its full sequence is uncharacterized protein (237 aa).

A divalent metal cation is bound by residues Glu91, Glu93, and Asp122.

This sequence belongs to the FAH family.

This is an uncharacterized protein from Methanocaldococcus jannaschii (strain ATCC 43067 / DSM 2661 / JAL-1 / JCM 10045 / NBRC 100440) (Methanococcus jannaschii).